Reading from the N-terminus, the 370-residue chain is Anhydro-N-acetylmuramic acid kinase (370 aa).

Residue 13–20 coordinates ATP; sequence GTSMDGVD.

The protein belongs to the anhydro-N-acetylmuramic acid kinase family.

The catalysed reaction is 1,6-anhydro-N-acetyl-beta-muramate + ATP + H2O = N-acetyl-D-muramate 6-phosphate + ADP + H(+). The protein operates within amino-sugar metabolism; 1,6-anhydro-N-acetylmuramate degradation. It participates in cell wall biogenesis; peptidoglycan recycling. Functionally, catalyzes the specific phosphorylation of 1,6-anhydro-N-acetylmuramic acid (anhMurNAc) with the simultaneous cleavage of the 1,6-anhydro ring, generating MurNAc-6-P. Is required for the utilization of anhMurNAc either imported from the medium or derived from its own cell wall murein, and thus plays a role in cell wall recycling. The chain is Anhydro-N-acetylmuramic acid kinase from Vibrio vulnificus (strain CMCP6).